The following is a 40-amino-acid chain: Photosystem II reaction center protein J (40 aa).

A helical transmembrane segment spans residues 8-28 (IPLWLIGTVAGILVLGLLGIF).

The protein belongs to the PsbJ family. As to quaternary structure, PSII is composed of 1 copy each of membrane proteins PsbA, PsbB, PsbC, PsbD, PsbE, PsbF, PsbH, PsbI, PsbJ, PsbK, PsbL, PsbM, PsbT, PsbX, PsbY, PsbZ, Psb30/Ycf12, at least 3 peripheral proteins of the oxygen-evolving complex and a large number of cofactors. It forms dimeric complexes.

It is found in the plastid. The protein resides in the chloroplast thylakoid membrane. Functionally, one of the components of the core complex of photosystem II (PSII). PSII is a light-driven water:plastoquinone oxidoreductase that uses light energy to abstract electrons from H(2)O, generating O(2) and a proton gradient subsequently used for ATP formation. It consists of a core antenna complex that captures photons, and an electron transfer chain that converts photonic excitation into a charge separation. This chain is Photosystem II reaction center protein J, found in Physcomitrium patens (Spreading-leaved earth moss).